The sequence spans 329 residues: Phenylalanine--tRNA ligase alpha subunit (329 aa).

It belongs to the class-II aminoacyl-tRNA synthetase family. Phe-tRNA synthetase alpha subunit type 1 subfamily. In terms of assembly, tetramer of two alpha and two beta subunits. Mg(2+) serves as cofactor.

The protein localises to the cytoplasm. It catalyses the reaction tRNA(Phe) + L-phenylalanine + ATP = L-phenylalanyl-tRNA(Phe) + AMP + diphosphate + H(+). This chain is Phenylalanine--tRNA ligase alpha subunit (pheS), found in Buchnera aphidicola subsp. Schizaphis graminum (strain Sg).